Here is a 403-residue protein sequence, read N- to C-terminus: Tryptophan synthase beta chain (403 aa).

Lys-93 bears the N6-(pyridoxal phosphate)lysine mark.

It belongs to the TrpB family. As to quaternary structure, tetramer of two alpha and two beta chains. It depends on pyridoxal 5'-phosphate as a cofactor.

The catalysed reaction is (1S,2R)-1-C-(indol-3-yl)glycerol 3-phosphate + L-serine = D-glyceraldehyde 3-phosphate + L-tryptophan + H2O. It participates in amino-acid biosynthesis; L-tryptophan biosynthesis; L-tryptophan from chorismate: step 5/5. The beta subunit is responsible for the synthesis of L-tryptophan from indole and L-serine. The protein is Tryptophan synthase beta chain of Acinetobacter baylyi (strain ATCC 33305 / BD413 / ADP1).